Consider the following 518-residue polypeptide: Phosphoacetylglucosamine mutase 1 (518 aa).

T49 carries the post-translational modification Phosphothreonine. The active-site Phosphoserine intermediate is the S51. Residues S51, D267, D269, and D271 each coordinate Mg(2+). Phosphoserine is present on S51. Substrate is bound by residues 360 to 362, 486 to 490, and R495; these read EAN and RASGT.

Belongs to the phosphohexose mutase family. Mg(2+) is required as a cofactor.

It localises to the cytoplasm. The protein localises to the nucleus. It catalyses the reaction N-acetyl-alpha-D-glucosamine 1-phosphate = N-acetyl-D-glucosamine 6-phosphate. It functions in the pathway nucleotide-sugar biosynthesis; UDP-N-acetyl-alpha-D-glucosamine biosynthesis; N-acetyl-alpha-D-glucosamine 1-phosphate from alpha-D-glucosamine 6-phosphate (route I): step 2/2. Its function is as follows. Catalyzes the conversion of GlcNAc-6-P into GlcNAc-1-P during the synthesis of uridine diphosphate/UDP-GlcNAc, which is a biosynthetic precursor of chitin and also supplies the amino sugars for N-linked oligosaccharides of glycoproteins. The protein is Phosphoacetylglucosamine mutase 1 of Schizosaccharomyces pombe (strain 972 / ATCC 24843) (Fission yeast).